A 134-amino-acid chain; its full sequence is Putative pre-16S rRNA nuclease (134 aa).

Belongs to the YqgF nuclease family.

Its subcellular location is the cytoplasm. Could be a nuclease involved in processing of the 5'-end of pre-16S rRNA. The chain is Putative pre-16S rRNA nuclease from Helicobacter pylori (strain J99 / ATCC 700824) (Campylobacter pylori J99).